We begin with the raw amino-acid sequence, 304 residues long: Killer cell immunoglobulin-like receptor 2DS2 (304 aa).

The first 21 residues, 1–21 (MSLMVVSMACVGFFLLQGAWP), serve as a signal peptide directing secretion. Over 22-245 (HEGVHRKPSL…SKTGNPRHLH (224 aa)) the chain is Extracellular. Ig-like C2-type domains lie at 42 to 107 (EETV…VTHS) and 142 to 205 (GESV…FRDS). Intrachain disulfides connect Cys-49–Cys-100 and Cys-149–Cys-198. N-linked (GlcNAc...) asparagine glycans are attached at residues Asn-84, Asn-178, and Asn-211. The segment at 220–239 (VTGNPSNSWPSPTEPSSKTG) is disordered. A helical transmembrane segment spans residues 246–265 (VLIGTSVVKIPFTILLFFLL). Topologically, residues 266-304 (HRWCSNKKNAAVMDQEPAGNRTVNSEDSDEQDHQEVSYA) are cytoplasmic. The tract at residues 280–304 (QEPAGNRTVNSEDSDEQDHQEVSYA) is disordered.

Belongs to the immunoglobulin superfamily.

Its subcellular location is the cell membrane. Its function is as follows. Receptor on natural killer (NK) cells for HLA-C alleles. Does not inhibit the activity of NK cells. This chain is Killer cell immunoglobulin-like receptor 2DS2, found in Homo sapiens (Human).